Reading from the N-terminus, the 106-residue chain is Putative protein SH (106 aa).

The segment at His48–Ser106 is disordered. Positions Phe58–Ser80 are enriched in basic and acidic residues. Residues Thr81–Thr92 show a composition bias toward low complexity.

In terms of tissue distribution, heart.

In terms of biological role, may be involved with the regulation of GNRH gene expression. It is not known if this protein is transcribed. The polypeptide is Putative protein SH (Rattus norvegicus (Rat)).